The primary structure comprises 807 residues: 1,4-alpha-glucan branching enzyme GlgB (807 aa).

Catalysis depends on aspartate 405, which acts as the Nucleophile. Residue glutamate 458 is the Proton donor of the active site.

This sequence belongs to the glycosyl hydrolase 13 family. GlgB subfamily. Monomer.

It carries out the reaction Transfers a segment of a (1-&gt;4)-alpha-D-glucan chain to a primary hydroxy group in a similar glucan chain.. It participates in glycan biosynthesis; glycogen biosynthesis. In terms of biological role, catalyzes the formation of the alpha-1,6-glucosidic linkages in glycogen by scission of a 1,4-alpha-linked oligosaccharide from growing alpha-1,4-glucan chains and the subsequent attachment of the oligosaccharide to the alpha-1,6 position. The protein is 1,4-alpha-glucan branching enzyme GlgB of Histophilus somni (strain 129Pt) (Haemophilus somnus).